The sequence spans 299 residues: B-box zinc finger protein 22 (299 aa).

Zn(2+) is bound by residues cysteine 5, cysteine 8, cysteine 28, histidine 33, cysteine 57, cysteine 60, cysteine 80, and histidine 85. The B box-type 1; atypical zinc-finger motif lies at 5-47 (CNVCEAAEATVLCCADEAALCWACDEKIHAANKLAGKHQRVPL). The segment at 57 to 99 (CDICQEASGFFFCLQDRALLCRKCDVAIHTVNPHVSAHQRFLL) adopts a B box-type 2; atypical zinc-finger fold. 2 disordered regions span residues 143–181 (FDHH…GSTT) and 206–299 (ENNG…RRRF). Composition is skewed to polar residues over residues 164–181 (VNDQ…GSTT), 251–260 (QIQSPPTASG), and 277–290 (ITSS…SPNQ).

In terms of assembly, interacts with HY5. In terms of processing, ubiquitinated by COP1 in vitro. COP1-mediated degradation of BBX22 by the proteasome occurs in the dark and is important for a precise skotomorphogenesis process and optimization of seedling growth under short days conditions.

It is found in the nucleus. Acts as a positive regulator of seedling photomorphogenesis and light-regulated inhibition of hypocotyl elongation, independently and in concert with HY5 and BBX21. Acts as a positive regulator of de-etiolation and influences chloroplast biogenesis and function through regulation of genes encoding chloroplast proteins. Acts downstream of COP1 and plays an important role in early and long-term adjustment of the shade avoidance syndrome (SAS) responses in natural environments. Regulates the expression of genes responsive to light hormone signals which may contribute to optimal seedling development. This Arabidopsis thaliana (Mouse-ear cress) protein is B-box zinc finger protein 22.